We begin with the raw amino-acid sequence, 360 residues long: MANRTVMVMAAGTGGHIVPGLAVAKELQSRGWKVVWLGTRRGMENKLVPPTGIPLERLNFHGVRGKGLLGSLKGALQLAGAFFSSAAQIFRHRPDVVLGMGGYVCLPGGVMAGLLWKPLVLVNADAGLLLSNKALLPFASKLVCGFDGSAARGPKALVTGNPVRGEIERIAAPAARFAGRSGPLKVLVVGGSLGAKVLNETLPQAMARLPAEQRPQLTHQTGEANFAAVEAAYQAAGLRQQVELLPFVDDMPKRLAECDLVICRAGAITVSELCAAGVPSVLVPLVVSTTSHQRDNAEWMAQAGAAWHLPQKELNADGLAGLLAGLDRDQLLDKAERARALARSGAAGRVADLCQQLAGE.

Residues 13–15 (TGG), R164, S192, and Q293 contribute to the UDP-N-acetyl-alpha-D-glucosamine site.

The protein belongs to the glycosyltransferase 28 family. MurG subfamily.

The protein localises to the cell inner membrane. The catalysed reaction is di-trans,octa-cis-undecaprenyl diphospho-N-acetyl-alpha-D-muramoyl-L-alanyl-D-glutamyl-meso-2,6-diaminopimeloyl-D-alanyl-D-alanine + UDP-N-acetyl-alpha-D-glucosamine = di-trans,octa-cis-undecaprenyl diphospho-[N-acetyl-alpha-D-glucosaminyl-(1-&gt;4)]-N-acetyl-alpha-D-muramoyl-L-alanyl-D-glutamyl-meso-2,6-diaminopimeloyl-D-alanyl-D-alanine + UDP + H(+). Its pathway is cell wall biogenesis; peptidoglycan biosynthesis. Cell wall formation. Catalyzes the transfer of a GlcNAc subunit on undecaprenyl-pyrophosphoryl-MurNAc-pentapeptide (lipid intermediate I) to form undecaprenyl-pyrophosphoryl-MurNAc-(pentapeptide)GlcNAc (lipid intermediate II). The protein is UDP-N-acetylglucosamine--N-acetylmuramyl-(pentapeptide) pyrophosphoryl-undecaprenol N-acetylglucosamine transferase of Chromobacterium violaceum (strain ATCC 12472 / DSM 30191 / JCM 1249 / CCUG 213 / NBRC 12614 / NCIMB 9131 / NCTC 9757 / MK).